Here is a 541-residue protein sequence, read N- to C-terminus: Protein VAPYRIN (541 aa).

The 135-residue stretch at 4 to 138 folds into the MSP domain; the sequence is LIKLDPSNIV…IDSAIKVMFV (135 aa). ANK repeat units follow at residues 176-205, 209-238, 242-271, 275-304, 309-338, 342-372, 374-392, 396-425, 429-458, and 462-491; these read QGQTLLHLAISKTRPDLVQLILEFKPDIEA, VGSTPLEAASSSGESLIVELLLAHKANTEG, SVFRPIHHASREGHMEILRLLLLKGARVDS, DGNTSLHLAVEEKRRDCARLLLANGARTDV, EGDTPLHIAAANGDENMVKLLLHKGATKYV, LGKTAFDVAAENGHSRLFDALRLGDNLCAAA, KGEVRTIQKVLESGGVING, NGWTSLHRAAFKGRMDAVRFLVEKGIDLDA, DGYTALHCAAESGHADVTEFLVKKGADVEA, and KGVSALQIVESLNYVGITRILVNGGASREG.

Interacts with EX70I at the periarbuscular membrane (PAM) around the arbuscule hyphal tips. As to expression, expressed in roots.

It is found in the cytoplasm. The protein localises to the nucleus. Its subcellular location is the cell membrane. Required for arbuscular mycorrhizal (AM) symbiosis with AM fungi (e.g. Glomus versiforme and Gigaspora gigantea) both during fungal passage across root epidermis and for arbuscule formation in cortical cells; this symbiosis promotes phosphorus (P) and copper (Cu) uptake. Essential for infection by symbiotic nitrogen-fixing rhizobial bacteria (e.g. Sinorhizobium meliloti) leading to the formation of root nodules. The sequence is that of Protein VAPYRIN from Medicago truncatula (Barrel medic).